Here is a 383-residue protein sequence, read N- to C-terminus: Ovalbumin (383 aa).

G2 bears the N-acetylglycine mark. A signal peptide (not cleaved) is located at residues 22-48; the sequence is HHANDNMLYSPFAILSTLAMVFLGAKD. S69 carries the phosphoserine modification. A disulfide bond links C74 and C121. Residues N293 and N312 are each glycosylated (N-linked (GlcNAc...) asparagine). S345 is subject to Phosphoserine.

It belongs to the serpin family. Ov-serpin subfamily. In terms of processing, the signal sequence is not cleaved. The functional signal for membrane translocation of ovalbumin becomes accessible when the nascent chain is 50 to 60 residues long. The hydrophobic sequence which lies between residues 27 and 43 folds back on the preceding residues to form an amphipathic hairpin structure which is the signal element recognized by the membrane. In terms of tissue distribution, major protein of egg white.

Its subcellular location is the secreted. Its function is as follows. Storage protein of egg white. Lack protease inhibitory activity. The protein is Ovalbumin (SERPINB14) of Coturnix japonica (Japanese quail).